The following is a 454-amino-acid chain: Phosphoglucosamine mutase (454 aa).

The Phosphoserine intermediate role is filled by S104. Residues S104, D241, D243, and D245 each contribute to the Mg(2+) site. The residue at position 104 (S104) is a Phosphoserine.

The protein belongs to the phosphohexose mutase family. Requires Mg(2+) as cofactor. Activated by phosphorylation.

The enzyme catalyses alpha-D-glucosamine 1-phosphate = D-glucosamine 6-phosphate. Functionally, catalyzes the conversion of glucosamine-6-phosphate to glucosamine-1-phosphate. In Paenarthrobacter aurescens (strain TC1), this protein is Phosphoglucosamine mutase.